The following is a 510-amino-acid chain: Maturase K (510 aa).

The protein belongs to the intron maturase 2 family. MatK subfamily.

The protein localises to the plastid. It is found in the chloroplast. Its function is as follows. Usually encoded in the trnK tRNA gene intron. Probably assists in splicing its own and other chloroplast group II introns. In Penstemon heterophyllus (Foothill penstemon), this protein is Maturase K.